The primary structure comprises 448 residues: Phosphoglucosamine mutase (448 aa).

Residue Ser-102 is the Phosphoserine intermediate of the active site. 4 residues coordinate Mg(2+): Ser-102, Asp-241, Asp-243, and Asp-245. Position 102 is a phosphoserine (Ser-102).

The protein belongs to the phosphohexose mutase family. Mg(2+) is required as a cofactor. In terms of processing, activated by phosphorylation.

The catalysed reaction is alpha-D-glucosamine 1-phosphate = D-glucosamine 6-phosphate. Catalyzes the conversion of glucosamine-6-phosphate to glucosamine-1-phosphate. This Ruegeria pomeroyi (strain ATCC 700808 / DSM 15171 / DSS-3) (Silicibacter pomeroyi) protein is Phosphoglucosamine mutase.